The primary structure comprises 214 residues: Large ribosomal subunit protein uL4c (214 aa).

A disordered region spans residues 43–80 (KQSNEKRQGSANTKTRSEVRGGGRKPWRQKGTGRARAG). Residues 64–75 (GGRKPWRQKGTG) are compositionally biased toward basic residues.

The protein belongs to the universal ribosomal protein uL4 family. In terms of assembly, part of the 50S ribosomal subunit.

Its subcellular location is the plastid. It localises to the chloroplast. Functionally, probably binds the 23S rRNA. In Porphyra purpurea (Red seaweed), this protein is Large ribosomal subunit protein uL4c (rpl4).